The following is a 135-amino-acid chain: Small ribosomal subunit protein uS12 (135 aa).

The disordered stretch occupies residues 1-20 (MPTINQLVRKGRHSKVTKSK). A compositionally biased stretch (basic residues) spans 9–18 (RKGRHSKVTK).

Belongs to the universal ribosomal protein uS12 family. Part of the 30S ribosomal subunit. Contacts proteins S8 and S17. May interact with IF1 in the 30S initiation complex.

In terms of biological role, with S4 and S5 plays an important role in translational accuracy. Its function is as follows. Interacts with and stabilizes bases of the 16S rRNA that are involved in tRNA selection in the A site and with the mRNA backbone. Located at the interface of the 30S and 50S subunits, it traverses the body of the 30S subunit contacting proteins on the other side and probably holding the rRNA structure together. The combined cluster of proteins S8, S12 and S17 appears to hold together the shoulder and platform of the 30S subunit. This Lactobacillus acidophilus (strain ATCC 700396 / NCK56 / N2 / NCFM) protein is Small ribosomal subunit protein uS12.